The following is a 261-amino-acid chain: Protein STAY-GREEN, chloroplastic (261 aa).

Residues 1 to 54 constitute a chloroplast transit peptide; that stretch reads MDTLTSAPLLTTKFKPSFSPQQKPCFPHRRRFENGKKNQSIVPVARLFGPAIFE.

This sequence belongs to the staygreen family.

It is found in the plastid. The protein resides in the chloroplast. Functionally, probably involved in the disassembling mechanism of the intact light-harvesting complex of photosystem II (LHCII) in the thylakoid membranes. Required for the chlorophyll breakdown pathway. Acts independent and upstream of pheophorbide a oxygenase (PAO). This chain is Protein STAY-GREEN, chloroplastic (SGR), found in Pisum sativum (Garden pea).